Here is a 282-residue protein sequence, read N- to C-terminus: NADPH-dependent 7-cyano-7-deazaguanine reductase (282 aa).

88–90 (IES) contacts substrate. 90–91 (SK) is a binding site for NADPH. The active-site Thioimide intermediate is the Cys-190. Asp-197 functions as the Proton donor in the catalytic mechanism. 229 to 230 (HE) contacts substrate. 258-259 (RG) contacts NADPH.

The protein belongs to the GTP cyclohydrolase I family. QueF type 2 subfamily. In terms of assembly, homodimer.

It localises to the cytoplasm. The enzyme catalyses 7-aminomethyl-7-carbaguanine + 2 NADP(+) = 7-cyano-7-deazaguanine + 2 NADPH + 3 H(+). It participates in tRNA modification; tRNA-queuosine biosynthesis. Catalyzes the NADPH-dependent reduction of 7-cyano-7-deazaguanine (preQ0) to 7-aminomethyl-7-deazaguanine (preQ1). This is NADPH-dependent 7-cyano-7-deazaguanine reductase from Escherichia coli O17:K52:H18 (strain UMN026 / ExPEC).